A 416-amino-acid polypeptide reads, in one-letter code: Serine hydroxymethyltransferase (416 aa).

(6S)-5,6,7,8-tetrahydrofolate is bound by residues Leu121 and 125–127 (GHL). At Lys230 the chain carries N6-(pyridoxal phosphate)lysine.

The protein belongs to the SHMT family. As to quaternary structure, homodimer. Requires pyridoxal 5'-phosphate as cofactor.

The protein localises to the cytoplasm. The catalysed reaction is (6R)-5,10-methylene-5,6,7,8-tetrahydrofolate + glycine + H2O = (6S)-5,6,7,8-tetrahydrofolate + L-serine. It functions in the pathway one-carbon metabolism; tetrahydrofolate interconversion. The protein operates within amino-acid biosynthesis; glycine biosynthesis; glycine from L-serine: step 1/1. Functionally, catalyzes the reversible interconversion of serine and glycine with tetrahydrofolate (THF) serving as the one-carbon carrier. This reaction serves as the major source of one-carbon groups required for the biosynthesis of purines, thymidylate, methionine, and other important biomolecules. Also exhibits THF-independent aldolase activity toward beta-hydroxyamino acids, producing glycine and aldehydes, via a retro-aldol mechanism. The chain is Serine hydroxymethyltransferase from Nitrosomonas eutropha (strain DSM 101675 / C91 / Nm57).